We begin with the raw amino-acid sequence, 379 residues long: 4-hydroxy-3-methylbut-2-enyl diphosphate reductase (379 aa).

Cysteine 39 provides a ligand contact to [4Fe-4S] cluster. (2E)-4-hydroxy-3-methylbut-2-enyl diphosphate is bound at residue histidine 69. Histidine 69 lines the dimethylallyl diphosphate pocket. Histidine 69 is a binding site for isopentenyl diphosphate. Position 130 (cysteine 130) interacts with [4Fe-4S] cluster. Histidine 158 lines the (2E)-4-hydroxy-3-methylbut-2-enyl diphosphate pocket. Histidine 158 provides a ligand contact to dimethylallyl diphosphate. Residue histidine 158 participates in isopentenyl diphosphate binding. Glutamate 160 serves as the catalytic Proton donor. A (2E)-4-hydroxy-3-methylbut-2-enyl diphosphate-binding site is contributed by threonine 223. Cysteine 261 is a binding site for [4Fe-4S] cluster. Residues serine 290, serine 291, asparagine 292, and serine 352 each coordinate (2E)-4-hydroxy-3-methylbut-2-enyl diphosphate. Dimethylallyl diphosphate-binding residues include serine 290, serine 291, asparagine 292, and serine 352. Serine 290, serine 291, asparagine 292, and serine 352 together coordinate isopentenyl diphosphate.

This sequence belongs to the IspH family. Requires [4Fe-4S] cluster as cofactor.

It carries out the reaction isopentenyl diphosphate + 2 oxidized [2Fe-2S]-[ferredoxin] + H2O = (2E)-4-hydroxy-3-methylbut-2-enyl diphosphate + 2 reduced [2Fe-2S]-[ferredoxin] + 2 H(+). It catalyses the reaction dimethylallyl diphosphate + 2 oxidized [2Fe-2S]-[ferredoxin] + H2O = (2E)-4-hydroxy-3-methylbut-2-enyl diphosphate + 2 reduced [2Fe-2S]-[ferredoxin] + 2 H(+). The protein operates within isoprenoid biosynthesis; dimethylallyl diphosphate biosynthesis; dimethylallyl diphosphate from (2E)-4-hydroxy-3-methylbutenyl diphosphate: step 1/1. Its pathway is isoprenoid biosynthesis; isopentenyl diphosphate biosynthesis via DXP pathway; isopentenyl diphosphate from 1-deoxy-D-xylulose 5-phosphate: step 6/6. Functionally, catalyzes the conversion of 1-hydroxy-2-methyl-2-(E)-butenyl 4-diphosphate (HMBPP) into a mixture of isopentenyl diphosphate (IPP) and dimethylallyl diphosphate (DMAPP). Acts in the terminal step of the DOXP/MEP pathway for isoprenoid precursor biosynthesis. The polypeptide is 4-hydroxy-3-methylbut-2-enyl diphosphate reductase (Synechocystis sp. (strain ATCC 27184 / PCC 6803 / Kazusa)).